The sequence spans 467 residues: tRNA-2-methylthio-N(6)-dimethylallyladenosine synthase (467 aa).

Residues 2 to 118 (PSVFIKTFGC…VAEIADNLLK (117 aa)) enclose the MTTase N-terminal domain. [4Fe-4S] cluster-binding residues include Cys11, Cys47, Cys81, Cys159, Cys163, and Cys166. In terms of domain architecture, Radical SAM core spans 145–379 (TKAQPIAYVS…LEIQNKITME (235 aa)). The 64-residue stretch at 382–445 (QKWVGQVVEI…GHTFYGTPLI (64 aa)) folds into the TRAM domain.

The protein belongs to the methylthiotransferase family. MiaB subfamily. Monomer. The cofactor is [4Fe-4S] cluster.

Its subcellular location is the cytoplasm. The catalysed reaction is N(6)-dimethylallyladenosine(37) in tRNA + (sulfur carrier)-SH + AH2 + 2 S-adenosyl-L-methionine = 2-methylsulfanyl-N(6)-dimethylallyladenosine(37) in tRNA + (sulfur carrier)-H + 5'-deoxyadenosine + L-methionine + A + S-adenosyl-L-homocysteine + 2 H(+). Catalyzes the methylthiolation of N6-(dimethylallyl)adenosine (i(6)A), leading to the formation of 2-methylthio-N6-(dimethylallyl)adenosine (ms(2)i(6)A) at position 37 in tRNAs that read codons beginning with uridine. In Methylacidiphilum infernorum (isolate V4) (Methylokorus infernorum (strain V4)), this protein is tRNA-2-methylthio-N(6)-dimethylallyladenosine synthase.